Here is a 423-residue protein sequence, read N- to C-terminus: uncharacterized protein (423 aa).

It belongs to the asfivirus E423R family.

The protein localises to the virion. This is an uncharacterized protein from Ornithodoros (relapsing fever ticks).